We begin with the raw amino-acid sequence, 232 residues long: Orotidine 5'-phosphate decarboxylase (232 aa).

Residues D11, K33, 60–69 (DLKFHDIPNT), T120, R181, Q190, G210, and R211 each bind substrate. Catalysis depends on K62, which acts as the Proton donor.

This sequence belongs to the OMP decarboxylase family. Type 1 subfamily. In terms of assembly, homodimer.

The enzyme catalyses orotidine 5'-phosphate + H(+) = UMP + CO2. Its pathway is pyrimidine metabolism; UMP biosynthesis via de novo pathway; UMP from orotate: step 2/2. In terms of biological role, catalyzes the decarboxylation of orotidine 5'-monophosphate (OMP) to uridine 5'-monophosphate (UMP). In Vibrio vulnificus (strain YJ016), this protein is Orotidine 5'-phosphate decarboxylase.